A 100-amino-acid polypeptide reads, in one-letter code: Urease subunit gamma (100 aa).

The protein belongs to the urease gamma subunit family. Heterotrimer of UreA (gamma), UreB (beta) and UreC (alpha) subunits. Three heterotrimers associate to form the active enzyme.

It is found in the cytoplasm. It catalyses the reaction urea + 2 H2O + H(+) = hydrogencarbonate + 2 NH4(+). The protein operates within nitrogen metabolism; urea degradation; CO(2) and NH(3) from urea (urease route): step 1/1. This is Urease subunit gamma from Chromohalobacter salexigens (strain ATCC BAA-138 / DSM 3043 / CIP 106854 / NCIMB 13768 / 1H11).